The primary structure comprises 314 residues: Ribosomal RNA small subunit methyltransferase A (314 aa).

Residues Asn29, Val31, Gly56, Glu77, Asp107, and Asn126 each contribute to the S-adenosyl-L-methionine site. A disordered region spans residues Pro291 to Leu314. Low complexity predominate over residues Gln303–Leu314.

The protein belongs to the class I-like SAM-binding methyltransferase superfamily. rRNA adenine N(6)-methyltransferase family. RsmA subfamily.

It localises to the cytoplasm. The catalysed reaction is adenosine(1518)/adenosine(1519) in 16S rRNA + 4 S-adenosyl-L-methionine = N(6)-dimethyladenosine(1518)/N(6)-dimethyladenosine(1519) in 16S rRNA + 4 S-adenosyl-L-homocysteine + 4 H(+). Functionally, specifically dimethylates two adjacent adenosines (A1518 and A1519) in the loop of a conserved hairpin near the 3'-end of 16S rRNA in the 30S particle. May play a critical role in biogenesis of 30S subunits. The sequence is that of Ribosomal RNA small subunit methyltransferase A from Mycolicibacterium gilvum (strain PYR-GCK) (Mycobacterium gilvum (strain PYR-GCK)).